Consider the following 150-residue polypeptide: Small ribosomal subunit protein eS19 (150 aa).

This sequence belongs to the eukaryotic ribosomal protein eS19 family. As to quaternary structure, part of the 30S ribosomal subunit.

Functionally, may be involved in maturation of the 30S ribosomal subunit. The protein is Small ribosomal subunit protein eS19 of Thermoplasma volcanium (strain ATCC 51530 / DSM 4299 / JCM 9571 / NBRC 15438 / GSS1).